The sequence spans 248 residues: Probable transcriptional regulatory protein Nham_3525 (248 aa).

The tract at residues 1–21 is disordered; the sequence is MAGHSQFKNIMHRKGRQDAQK.

It belongs to the TACO1 family.

The protein resides in the cytoplasm. This Nitrobacter hamburgensis (strain DSM 10229 / NCIMB 13809 / X14) protein is Probable transcriptional regulatory protein Nham_3525.